The sequence spans 105 residues: Antitoxin YafW (105 aa).

It belongs to the CbeA/YafW/YfjZ antitoxin family.

Functionally, antitoxin component of a type IV toxin-antitoxin (TA) system. Antitoxin that counteracts the effect of cognate toxin YkfI. It does not seem to bind to the cognate toxin but instead induces toxin loss by an unknown mechanism. Co-overexpression of toxin YkfI and antitoxin YafW leads to formation of elongated cells. In Escherichia coli (strain K12), this protein is Antitoxin YafW (yafW).